The primary structure comprises 222 residues: Cysteine protease inhibitor 1 (222 aa).

Positions 1–26 (MKSINILSFLLLSSTLSLVAFARSFT) are cleaved as a signal peptide. Positions 27–42 (SENPIVLPTTCHDDDN) are excised as a propeptide. A Vacuolar targeting signal motif is present at residues 29 to 34 (NPIVLP). Disulfide bonds link C84–C136 and C185–C191.

It belongs to the protease inhibitor I3 (leguminous Kunitz-type inhibitor) family. In terms of tissue distribution, tubers, leaves.

It localises to the vacuole. Potent inhibitor of cathepsin l (cysteine protease). Does not inhibit trypsin or chymotrypsin (serine proteases). May protect the plant by inhibiting proteases of invading organisms. The polypeptide is Cysteine protease inhibitor 1 (Solanum tuberosum (Potato)).